We begin with the raw amino-acid sequence, 520 residues long: 2,3-bisphosphoglycerate-independent phosphoglycerate mutase (520 aa).

D13 and S63 together coordinate Mn(2+). Residue S63 is the Phosphoserine intermediate of the active site. Residues H124, 154–155, R192, R198, 268–271, and K342 contribute to the substrate site; these read RD and RADR. Residues D409, H413, D450, H451, and H469 each coordinate Mn(2+).

It belongs to the BPG-independent phosphoglycerate mutase family. As to quaternary structure, monomer. Requires Mn(2+) as cofactor.

The catalysed reaction is (2R)-2-phosphoglycerate = (2R)-3-phosphoglycerate. It functions in the pathway carbohydrate degradation; glycolysis; pyruvate from D-glyceraldehyde 3-phosphate: step 3/5. Its function is as follows. Catalyzes the interconversion of 2-phosphoglycerate and 3-phosphoglycerate. The chain is 2,3-bisphosphoglycerate-independent phosphoglycerate mutase from Colwellia psychrerythraea (strain 34H / ATCC BAA-681) (Vibrio psychroerythus).